A 181-amino-acid polypeptide reads, in one-letter code: Nucleoside triphosphate/diphosphate phosphatase (181 aa).

Catalysis depends on Arg-26, which acts as the Proton donor. Mg(2+) contacts are provided by Asn-90, Asp-106, Asp-108, Asp-110, Asp-123, and Glu-126.

The protein belongs to the Ntdp family. Mg(2+) is required as a cofactor.

It carries out the reaction a ribonucleoside 5'-triphosphate + H2O = a ribonucleoside 5'-diphosphate + phosphate + H(+). The catalysed reaction is a ribonucleoside 5'-diphosphate + H2O = a ribonucleoside 5'-phosphate + phosphate + H(+). Its function is as follows. Has nucleoside phosphatase activity towards nucleoside triphosphates and nucleoside diphosphates. This chain is Nucleoside triphosphate/diphosphate phosphatase, found in Staphylococcus carnosus (strain TM300).